The primary structure comprises 164 residues: Lipoprotein signal peptidase (164 aa).

Transmembrane regions (helical) follow at residues 68-88 (TILVVLAGAAVIFIAAMLWNA) and 96-116 (FWGLSLILGGAAGNVFDRAMF). Residues D121 and D139 contribute to the active site. The chain crosses the membrane as a helical span at residues 134–154 (TFNVADSAIVVGSCLLLIDLL).

The protein belongs to the peptidase A8 family.

It localises to the cell inner membrane. It catalyses the reaction Release of signal peptides from bacterial membrane prolipoproteins. Hydrolyzes -Xaa-Yaa-Zaa-|-(S,diacylglyceryl)Cys-, in which Xaa is hydrophobic (preferably Leu), and Yaa (Ala or Ser) and Zaa (Gly or Ala) have small, neutral side chains.. Its pathway is protein modification; lipoprotein biosynthesis (signal peptide cleavage). This protein specifically catalyzes the removal of signal peptides from prolipoproteins. In Solibacter usitatus (strain Ellin6076), this protein is Lipoprotein signal peptidase.